The following is a 73-amino-acid chain: Homeodomain-only protein (73 aa).

Positions 3–62 (AQTASGPTEDQVEILEYNFNKVNKHPDPTTLCLIAAEAGLTEEQTQKWFKQRLAEWRRSE) form a DNA-binding region, homeobox; degenerate.

In terms of assembly, interacts with serum response factor (SRF). Component of a large complex containing histone deacetylases such as HDAC2. Interacts with the acetylated forms of HSPA1A and HSPA1B. Interacts with HSPA8. In terms of tissue distribution, expressed in the embryonic and adult heart and in the adult brain, liver, lung, skeletal muscle, intestine and spleen. Throughout embryonic and postnatal development, it is expressed in the myocardium.

It localises to the nucleus. The protein resides in the cytoplasm. Its function is as follows. Atypical homeodomain protein which does not bind DNA and is required to modulate cardiac growth and development. Acts via its interaction with SRF, thereby modulating the expression of SRF-dependent cardiac-specific genes and cardiac development. Prevents SRF-dependent transcription either by inhibiting SRF binding to DNA or by recruiting histone deacetylase (HDAC) proteins that prevent transcription by SRF. Overexpression causes cardiac hypertrophy. Acts as a co-chaperone for HSPA1A and HSPA1B chaperone proteins and assists in chaperone-mediated protein refolding. This is Homeodomain-only protein (Hopx) from Mus musculus (Mouse).